The sequence spans 259 residues: Pre-mRNA-splicing factor CWC24 (259 aa).

Residues 1-67 (MFRKRLVNKS…HENEGKLQKK (67 aa)) form a disordered region. Residues 25 to 39 (FSEEKLVASDEEKGS) are compositionally biased toward basic and acidic residues. At serine 33 the chain carries Phosphoserine. Residues 47 to 57 (KSGNSRTLQLS) show a composition bias toward polar residues. Residues 58–67 (HENEGKLQKK) show a composition bias toward basic and acidic residues. A Phosphoserine modification is found at serine 105. Residues 138–166 (DFQPDVCKDYKQTGYCGYGDSCKFLHSRD) form a C3H1-type zinc finger. The RING-type zinc-finger motif lies at 199 to 237 (CTLCKEDYKSPVVTNCGHYFCGSCFAKDMKKGTKCFICH).

The protein belongs to the CWC24 family. Belongs to the CWC complex (or CEF1-associated complex), a spliceosome sub-complex reminiscent of a late-stage spliceosome composed of the U2, U5 and U6 snRNAs and at least BUD13, BUD31, BRR2, CDC40, CEF1, CLF1, CUS1, CWC2, CWC15, CWC21, CWC22, CWC23, CWC24, CWC25, CWC27, ECM2, HSH155, IST3, ISY1, LEA1, MSL1, NTC20, PRP8, PRP9, PRP11, PRP19, PRP21, PRP22, PRP45, PRP46, SLU7, SMB1, SMD1, SMD2, SMD3, SMX2, SMX3, SNT309, SNU114, SPP2, SYF1, SYF2, RSE1 and YJU2.

It is found in the nucleus. In terms of biological role, involved in pre-mRNA splicing. The polypeptide is Pre-mRNA-splicing factor CWC24 (CWC24) (Saccharomyces cerevisiae (strain ATCC 204508 / S288c) (Baker's yeast)).